We begin with the raw amino-acid sequence, 376 residues long: D-alanine--D-alanine ligase B (376 aa).

The ATP-grasp domain maps to 155 to 361; that stretch reads KRLMRDAGLP…QTDLMDKLIA (207 aa). ATP is bound at residue 184–239; sequence AALGTPDLFVKPANLGSSVGVSRARSEEEFAASCALAFRYDRKILVEQALNGAREI. Mg(2+) is bound by residues Asp-316, Glu-328, and Asn-330.

Belongs to the D-alanine--D-alanine ligase family. The cofactor is Mg(2+). Requires Mn(2+) as cofactor.

It localises to the cytoplasm. The catalysed reaction is 2 D-alanine + ATP = D-alanyl-D-alanine + ADP + phosphate + H(+). It participates in cell wall biogenesis; peptidoglycan biosynthesis. Its function is as follows. Cell wall formation. The sequence is that of D-alanine--D-alanine ligase B from Bradyrhizobium diazoefficiens (strain JCM 10833 / BCRC 13528 / IAM 13628 / NBRC 14792 / USDA 110).